The sequence spans 128 residues: Fluoride-specific ion channel FluC (128 aa).

Helical transmembrane passes span 5–25 (LFIS…GLLF), 34–54 (FGTL…LGLF), 67–87 (FLIT…SEVV), and 99–119 (FCVL…GIWI). Residues G74 and T77 each contribute to the Na(+) site.

Belongs to the fluoride channel Fluc/FEX (TC 1.A.43) family.

Its subcellular location is the cell inner membrane. It carries out the reaction fluoride(in) = fluoride(out). Na(+) is not transported, but it plays an essential structural role and its presence is essential for fluoride channel function. Its function is as follows. Fluoride-specific ion channel. Important for reducing fluoride concentration in the cell, thus reducing its toxicity. The polypeptide is Fluoride-specific ion channel FluC (Haemophilus influenzae (strain PittGG)).